Reading from the N-terminus, the 37-residue chain is Cytochrome b6-f complex subunit 5 (37 aa).

A helical membrane pass occupies residues Leu-5–Ala-25.

Belongs to the PetG family. The 4 large subunits of the cytochrome b6-f complex are cytochrome b6, subunit IV (17 kDa polypeptide, PetD), cytochrome f and the Rieske protein, while the 4 small subunits are PetG, PetL, PetM and PetN. The complex functions as a dimer.

The protein localises to the plastid. The protein resides in the chloroplast thylakoid membrane. In terms of biological role, component of the cytochrome b6-f complex, which mediates electron transfer between photosystem II (PSII) and photosystem I (PSI), cyclic electron flow around PSI, and state transitions. PetG is required for either the stability or assembly of the cytochrome b6-f complex. This chain is Cytochrome b6-f complex subunit 5, found in Mesostigma viride (Green alga).